The primary structure comprises 487 residues: Glutamate--tRNA ligase (487 aa).

Residues 13–23 (PSPTGLFHIGG) carry the 'HIGH' region motif. Positions 255–259 (KLSKR) match the 'KMSKS' region motif. Lys258 lines the ATP pocket.

The protein belongs to the class-I aminoacyl-tRNA synthetase family. Glutamate--tRNA ligase type 1 subfamily. Monomer.

The protein resides in the cytoplasm. It catalyses the reaction tRNA(Glu) + L-glutamate + ATP = L-glutamyl-tRNA(Glu) + AMP + diphosphate. Catalyzes the attachment of glutamate to tRNA(Glu) in a two-step reaction: glutamate is first activated by ATP to form Glu-AMP and then transferred to the acceptor end of tRNA(Glu). The chain is Glutamate--tRNA ligase from Malacoplasma penetrans (strain HF-2) (Mycoplasma penetrans).